The chain runs to 137 residues: 3-hydroxyacyl-[acyl-carrier-protein] dehydratase FabZ (137 aa).

His-46 is an active-site residue.

It belongs to the thioester dehydratase family. FabZ subfamily.

The protein resides in the cytoplasm. The catalysed reaction is a (3R)-hydroxyacyl-[ACP] = a (2E)-enoyl-[ACP] + H2O. In terms of biological role, involved in unsaturated fatty acids biosynthesis. Catalyzes the dehydration of short chain beta-hydroxyacyl-ACPs and long chain saturated and unsaturated beta-hydroxyacyl-ACPs. This Thermotoga maritima (strain ATCC 43589 / DSM 3109 / JCM 10099 / NBRC 100826 / MSB8) protein is 3-hydroxyacyl-[acyl-carrier-protein] dehydratase FabZ.